Reading from the N-terminus, the 483-residue chain is Trigger factor (483 aa).

The PPIase FKBP-type domain occupies 166-251 (TDTVNIDYVG…INDVFTKEKP (86 aa)). Over residues 435-460 (GEEPKLSTTKKVVEPTEEKTRKDSKM) the composition is skewed to basic and acidic residues. The tract at residues 435 to 483 (GEEPKLSTTKKVVEPTEEKTRKDSKMSTKKPAAKPAAKPAAATKKPVKK) is disordered. A compositionally biased stretch (low complexity) spans 467–483 (AKPAAKPAAATKKPVKK).

Belongs to the FKBP-type PPIase family. Tig subfamily.

The protein localises to the cytoplasm. It catalyses the reaction [protein]-peptidylproline (omega=180) = [protein]-peptidylproline (omega=0). Functionally, involved in protein export. Acts as a chaperone by maintaining the newly synthesized protein in an open conformation. Functions as a peptidyl-prolyl cis-trans isomerase. The sequence is that of Trigger factor from Mycoplasma mobile (strain ATCC 43663 / 163K / NCTC 11711) (Mesomycoplasma mobile).